Consider the following 358-residue polypeptide: Branched-chain amino acid aminotransferase gloG (358 aa).

Arg-91 serves as a coordination point for pyridoxal 5'-phosphate. Lys-195 functions as the Proton acceptor in the catalytic mechanism. Lys-195 carries the N6-(pyridoxal phosphate)lysine modification. Glu-231 contributes to the pyridoxal 5'-phosphate binding site.

It belongs to the class-IV pyridoxal-phosphate-dependent aminotransferase family. Pyridoxal 5'-phosphate serves as cofactor.

It carries out the reaction L-isoleucine + 2-oxoglutarate = (S)-3-methyl-2-oxopentanoate + L-glutamate. It catalyses the reaction L-leucine + 2-oxoglutarate = 4-methyl-2-oxopentanoate + L-glutamate. The catalysed reaction is L-valine + 2-oxoglutarate = 3-methyl-2-oxobutanoate + L-glutamate. Its pathway is mycotoxin biosynthesis. In terms of biological role, branched-chain amino acid aminotransferase; part of the gene cluster that mediates the biosynthesis of pneumocandins, lipohexapeptides of the echinocandin family that prevent fungal cell wall formation by non-competitive inhibition of beta-1,3-glucan synthase. The 10,12-dimethylmyristoyl side chain is synthesized by the reducing polyketide synthase gloL/GLPKS4. The thioesterase gloN/GLHYD exclusively interacts with gloL/GLPKS4 to maintain turnover of the polyketide side chain. The 10R,12S-dimethylmyristic acid is then transferred to the first thiolation domain of the nonribosomal peptide synthetase gloA/GLNRPS4 by the acyl-AMP ligase gloD/GLligase, followed by its acylation to L-ornithine to trigger elongation of the cyclic hexapeptide. L-ornithine, 4R-hydroxyl-L-proline (generated from L-proline by the dioxygenase gloF/GLOXY2), 3S-hydroxyl-L-homotyrosine (generated by gloG/GLHtyB, gloH/GLHtyA, gloI/GLHtyC, gloJ/GLHtyD and hydroxylated at C-3 by the dioxygenase gloM/GLOXY1), 3R-hydroxyl-L-glutamine (generated from L-glutamine probably by the dioxygenase gloE/GLOXY3) and 3S-hydroxyl-L-proline (generated from L-proline by the dioxygenase gloF/GLOXY2 to yield pneumocandin B0), or 3S-hydroxyl-4S-methyl-L-proline (generated from L-leucine by the dioxygenase gloC/GLOXY4 to yield pneumocandin A0) are sequentially added to the growing chain. The last C domain of gloA/GLNRPS4 is proposed to be responsible for cyclization by condensation to form the peptide bond between L-ornithine and 3S-hydroxyl-4S-methyl-L-proline (for pneumocandin A0) or 3S-hydroxyl-L-proline (for pneumocandin B0). Finally, the subsequent C-4 hydroxylation of 3S-hydroxyl-L-homotyrosine and L-ornithine dihydroxylation at C-4 and C-5 are performed by the cytochrome P450 monooxygenases gloP/GLP450-1 and gloO/GLP450-2, respectively. This chain is Branched-chain amino acid aminotransferase gloG, found in Glarea lozoyensis (strain ATCC 20868 / MF5171).